Reading from the N-terminus, the 501-residue chain is Geissoschizine oxidase (501 aa).

A helical membrane pass occupies residues 1–21 (MEFSFSSPLLYILYFLLFFIV). Heme is bound at residue C442.

The protein belongs to the cytochrome P450 family. The cofactor is heme.

Its subcellular location is the membrane. The catalysed reaction is (19E)-geissoschizine + reduced [NADPH--hemoprotein reductase] + O2 = akuammicine + formate + oxidized [NADPH--hemoprotein reductase] + H2O + H(+). Its pathway is alkaloid biosynthesis. Its function is as follows. A cytochrome P450 monooxygenase involved in the biosynthesis of strychnos monoterpene indole alkaloids (MIAs) natural products, compounds with effects on glucose absorption. Catalyzes the conversion of geissoschizine to akuammicine. The protein is Geissoschizine oxidase of Alstonia scholaris (Dogbane).